Here is a 212-residue protein sequence, read N- to C-terminus: Large ribosomal subunit protein uL3 (212 aa).

Residues 136-155 (THGNSVSHRVLGSTGQNQTP) are disordered. Glutamine 153 bears the N5-methylglutamine mark.

Belongs to the universal ribosomal protein uL3 family. In terms of assembly, part of the 50S ribosomal subunit. Forms a cluster with proteins L14 and L19. Post-translationally, methylated by PrmB.

In terms of biological role, one of the primary rRNA binding proteins, it binds directly near the 3'-end of the 23S rRNA, where it nucleates assembly of the 50S subunit. In Acinetobacter baumannii (strain AB307-0294), this protein is Large ribosomal subunit protein uL3.